The chain runs to 262 residues: MRRTLYRLMIELTNGRFTSYILRKFAQSRLSSIIIPSYAKVFQINQDEMEKGLKEYRTLHELFTRKLKEGKRSIDTDASSIVSPVDGVFADHGPIEDTKTFDIKGKRYSIVDMLGNEERAQRYAGGTYMVIYLSPSHYHRIHSPLSGSVTERFVLGRKSYPVNAAGMEYGKEPLSKNYRSVTEVNSDGEHMALVKVGAMFVNSIELLHERDTVQKGEEMAYFTFGSTVVLLFEKDMIEVVQELKSGQELRLGEKIATRLAHK.

Active-site charge relay system; for autoendoproteolytic cleavage activity residues include aspartate 86, histidine 142, and serine 226. Catalysis depends on serine 226, which acts as the Schiff-base intermediate with substrate; via pyruvic acid; for decarboxylase activity. Serine 226 carries the post-translational modification Pyruvic acid (Ser); by autocatalysis.

It belongs to the phosphatidylserine decarboxylase family. PSD-B subfamily. Prokaryotic type I sub-subfamily. As to quaternary structure, heterodimer of a large membrane-associated beta subunit and a small pyruvoyl-containing alpha subunit. It depends on pyruvate as a cofactor. Is synthesized initially as an inactive proenzyme. Formation of the active enzyme involves a self-maturation process in which the active site pyruvoyl group is generated from an internal serine residue via an autocatalytic post-translational modification. Two non-identical subunits are generated from the proenzyme in this reaction, and the pyruvate is formed at the N-terminus of the alpha chain, which is derived from the carboxyl end of the proenzyme. The autoendoproteolytic cleavage occurs by a canonical serine protease mechanism, in which the side chain hydroxyl group of the serine supplies its oxygen atom to form the C-terminus of the beta chain, while the remainder of the serine residue undergoes an oxidative deamination to produce ammonia and the pyruvoyl prosthetic group on the alpha chain. During this reaction, the Ser that is part of the protease active site of the proenzyme becomes the pyruvoyl prosthetic group, which constitutes an essential element of the active site of the mature decarboxylase.

It is found in the cell membrane. The enzyme catalyses a 1,2-diacyl-sn-glycero-3-phospho-L-serine + H(+) = a 1,2-diacyl-sn-glycero-3-phosphoethanolamine + CO2. Its pathway is phospholipid metabolism; phosphatidylethanolamine biosynthesis; phosphatidylethanolamine from CDP-diacylglycerol: step 2/2. Functionally, catalyzes the formation of phosphatidylethanolamine (PtdEtn) from phosphatidylserine (PtdSer). The sequence is that of Phosphatidylserine decarboxylase proenzyme from Bacillus cereus (strain AH820).